The sequence spans 580 residues: mRNA cap guanine-N(7) methyltransferase (580 aa).

Composition is skewed to polar residues over residues 1–17 and 25–53; these read MSGSKQGSEKASITSLI and EATSVSTQNQSPKTQITQTENVEVQNSDL. The tract at residues 1–222 is disordered; the sequence is MSGSKQGSEK…PVEAQPYSRL (222 aa). Over residues 54 to 67 the composition is skewed to basic and acidic residues; sequence KVTENKPKNTEMKP. Polar residues predominate over residues 69 to 90; sequence DPNTNASTTENTPITTSNAQVS. Over residues 102 to 154 the composition is skewed to basic and acidic residues; that stretch reads REPEEAQNRYDRYVPRVDNRRRGEPRVAEVRQDPRYAKYLRQDQEERRIRRPD. A compositionally biased stretch (acidic residues) spans 191–214; it reads ESEENGDEQQGDDEEETPGNEEPV. The mRNA cap 0 methyltransferase domain maps to 271-579; the sequence is SPIYKLRNFN…FYLGFAFEKL (309 aa). 280-281 contacts mRNA; it reads NN. Positions 284, 308, 330, 376, 406, and 411 each coordinate S-adenosyl-L-methionine.

It belongs to the class I-like SAM-binding methyltransferase superfamily. mRNA cap 0 methyltransferase family.

The protein localises to the nucleus. It carries out the reaction a 5'-end (5'-triphosphoguanosine)-ribonucleoside in mRNA + S-adenosyl-L-methionine = a 5'-end (N(7)-methyl 5'-triphosphoguanosine)-ribonucleoside in mRNA + S-adenosyl-L-homocysteine. Its function is as follows. Responsible for methylating the 5'-cap structure of mRNAs. The sequence is that of mRNA cap guanine-N(7) methyltransferase (ABD1) from Meyerozyma guilliermondii (strain ATCC 6260 / CBS 566 / DSM 6381 / JCM 1539 / NBRC 10279 / NRRL Y-324) (Yeast).